A 161-amino-acid polypeptide reads, in one-letter code: SsrA-binding protein (161 aa).

Basic and acidic residues predominate over residues 139–153 (RESIKRKEENRELDR). The interval 139–161 (RESIKRKEENRELDRLRKRRRQE) is disordered.

The protein belongs to the SmpB family.

It is found in the cytoplasm. Functionally, required for rescue of stalled ribosomes mediated by trans-translation. Binds to transfer-messenger RNA (tmRNA), required for stable association of tmRNA with ribosomes. tmRNA and SmpB together mimic tRNA shape, replacing the anticodon stem-loop with SmpB. tmRNA is encoded by the ssrA gene; the 2 termini fold to resemble tRNA(Ala) and it encodes a 'tag peptide', a short internal open reading frame. During trans-translation Ala-aminoacylated tmRNA acts like a tRNA, entering the A-site of stalled ribosomes, displacing the stalled mRNA. The ribosome then switches to translate the ORF on the tmRNA; the nascent peptide is terminated with the 'tag peptide' encoded by the tmRNA and targeted for degradation. The ribosome is freed to recommence translation, which seems to be the essential function of trans-translation. This chain is SsrA-binding protein, found in Syntrophobacter fumaroxidans (strain DSM 10017 / MPOB).